The primary structure comprises 170 residues: Large ribosomal subunit protein uL6m (170 aa).

It belongs to the universal ribosomal protein uL6 family.

It localises to the mitochondrion. The protein is Large ribosomal subunit protein uL6m (mrpl6) of Dictyostelium discoideum (Social amoeba).